Reading from the N-terminus, the 555-residue chain is CTP synthase (555 aa).

The interval 1 to 272 is amidoligase domain; that stretch reads MQPTSTTTKH…DAYVVRKLDL (272 aa). A CTP-binding site is contributed by Ser19. UTP is bound at residue Ser19. Residues 20 to 25 and Asp77 each bind ATP; that span reads SLGKGL. Mg(2+) is bound by residues Asp77 and Glu146. CTP contacts are provided by residues 153 to 155, 193 to 198, and Lys229; these read DIE and KTKPTQ. Residues 193 to 198 and Lys229 contribute to the UTP site; that span reads KTKPTQ. One can recognise a Glutamine amidotransferase type-1 domain in the interval 297-548; that stretch reads TVALVGKYID…VKAAVARQVA (252 aa). Gly360 contributes to the L-glutamine binding site. Cys387 functions as the Nucleophile; for glutamine hydrolysis in the catalytic mechanism. L-glutamine contacts are provided by residues 388-391, Glu411, and Arg473; that span reads LGLQ. Residues His521 and Glu523 contribute to the active site.

Belongs to the CTP synthase family. Homotetramer.

The enzyme catalyses UTP + L-glutamine + ATP + H2O = CTP + L-glutamate + ADP + phosphate + 2 H(+). It carries out the reaction L-glutamine + H2O = L-glutamate + NH4(+). It catalyses the reaction UTP + NH4(+) + ATP = CTP + ADP + phosphate + 2 H(+). It functions in the pathway pyrimidine metabolism; CTP biosynthesis via de novo pathway; CTP from UDP: step 2/2. Its activity is regulated as follows. Allosterically activated by GTP, when glutamine is the substrate; GTP has no effect on the reaction when ammonia is the substrate. The allosteric effector GTP functions by stabilizing the protein conformation that binds the tetrahedral intermediate(s) formed during glutamine hydrolysis. Inhibited by the product CTP, via allosteric rather than competitive inhibition. Functionally, catalyzes the ATP-dependent amination of UTP to CTP with either L-glutamine or ammonia as the source of nitrogen. Regulates intracellular CTP levels through interactions with the four ribonucleotide triphosphates. The chain is CTP synthase from Streptomyces griseus subsp. griseus (strain JCM 4626 / CBS 651.72 / NBRC 13350 / KCC S-0626 / ISP 5235).